The primary structure comprises 545 residues: Labda-7,13-dienyl diphosphate synthase (545 aa).

The DXDDTA motif signature appears at Asp315–Ala320. The short motif at Arg444–Trp450 is the RXXDGSW motif element. A disordered region spans residues Leu526–Asp545.

The protein belongs to the terpene synthase family. It depends on Mg(2+) as a cofactor.

It carries out the reaction (2E,6E,10E)-geranylgeranyl diphosphate = (13E)-labda-7,13-dien-15-yl diphosphate. In terms of biological role, involved in the biosynthesis of the labdane-type bicyclic diterpene labda-7,13(16),14-triene. Catalyzes the conversion of geranylgeranyl diphosphate (GGDP) into labda-7,13(E)-dienyl diphosphate. This chain is Labda-7,13-dienyl diphosphate synthase, found in Streptomyces clavuligerus.